A 340-amino-acid chain; its full sequence is MNVFEPRLSSWLENAGDDDDVVLSSRIRLARNLKDEQFPVYEQKEEIVDNIAEVFDDNFTLIKMNQISLLQKALLVEKHLISPYMMNKSEYGAVLLNEEENVSIMLNEEDHLRIQCMTPGLRLFDALEAALQIDGYVEEKLSYAFDKEFGYLTSCVTNIGTGMRASVMVHLPGLVTTKRIKSVIEAIRSLGFVVRGIYGEGSMPASNIFQVSNQVTLGKTETEIVEDLTQVMEQIIMQERVARTTLKQKFHIALEDRVFRSYGLLMNCRIISMKEASDAISDIRLGVELGFFEHISRQKMNELVLFSQPAFLRREAGRDMDELEEKVIRAKVIREILGDK.

Residues 21–242 (VVLSSRIRLA…EQIIMQERVA (222 aa)) enclose the Phosphagen kinase C-terminal domain. ATP contacts are provided by residues 24-28 (SSRIR), histidine 79, arginine 113, 164-168 (RASVM), and 195-200 (RGIYGE).

Belongs to the ATP:guanido phosphotransferase family.

The enzyme catalyses L-arginyl-[protein] + ATP = N(omega)-phospho-L-arginyl-[protein] + ADP + H(+). Its function is as follows. Catalyzes the specific phosphorylation of arginine residues in proteins. In Listeria monocytogenes serotype 4b (strain CLIP80459), this protein is Protein-arginine kinase.